The following is a 357-amino-acid chain: MTERKHGLTYADSGVDIDAGNRLVDLIKPMVRATARAGADSEIGGFGGLFDLKAAGFKDPVLVAATDGVGTKIKVAIDAGLHTGIGIDLVAMSVNDLVVQGAEPLFFLDYFACGKLDPEAAAEIVAGVAEACRESGCALIGGETAEMPGLYKDGDYDLAGFSVGAAERGTLLPSKDIAEGDAVIGLASSGVHSNGFSLVRKIVEKSGLPYDAPAPFSPVMTLGGALLAPTKLYVKSCLQAIRDTGAVKGLAHITGGGFTENIPRVLPKHLGVGIDLPRIPVLPVFKWLAEQGEIAELELLRTFNCGIGMVIIVKADAVDQVTESLTASGESVHLLGQVIAAKGEQRVVYDGHLDLAW.

The protein belongs to the AIR synthase family.

It localises to the cytoplasm. It catalyses the reaction 2-formamido-N(1)-(5-O-phospho-beta-D-ribosyl)acetamidine + ATP = 5-amino-1-(5-phospho-beta-D-ribosyl)imidazole + ADP + phosphate + H(+). Its pathway is purine metabolism; IMP biosynthesis via de novo pathway; 5-amino-1-(5-phospho-D-ribosyl)imidazole from N(2)-formyl-N(1)-(5-phospho-D-ribosyl)glycinamide: step 2/2. The protein is Phosphoribosylformylglycinamidine cyclo-ligase of Rhodopseudomonas palustris (strain ATCC BAA-98 / CGA009).